Here is a 299-residue protein sequence, read N- to C-terminus: MLKSSKKEDSSKKNQNNKLIFTVRKLFSPIKNFFRKTKTPDNFFGVIKRLKINSQKMTLDERNILANLLELEDKTIEDIMVPRSDIAAIKLTTNLEELSESIKLEVPHTRTLIYDGTLDNVVGFIHIKDLFKALATKQNGRLKKLIRKHIIAAPSMKLLDLLAKMRRERTHIAIVVDEYGGTDGLVTIEDLIEEIVGRIDDEHDQQLDSDNFKVINNSTIIANARVEVEVLEEIIGEKLHNDYDEFDTIGGLVLTRVSSVPAIGTRIDISENIEIEVTDATPRSLKQVKIRLKNGLNGQ.

2 CBS domains span residues 80–142 (MVPR…NGRL) and 145–202 (LIRK…IDDE).

The protein belongs to the UPF0053 family. Hemolysin C subfamily.

The polypeptide is Hemolysin C homolog (tlyC) (Rickettsia conorii (strain ATCC VR-613 / Malish 7)).